Reading from the N-terminus, the 248-residue chain is 3-deoxy-manno-octulosonate cytidylyltransferase (248 aa).

It belongs to the KdsB family.

It is found in the cytoplasm. The enzyme catalyses 3-deoxy-alpha-D-manno-oct-2-ulosonate + CTP = CMP-3-deoxy-beta-D-manno-octulosonate + diphosphate. It participates in nucleotide-sugar biosynthesis; CMP-3-deoxy-D-manno-octulosonate biosynthesis; CMP-3-deoxy-D-manno-octulosonate from 3-deoxy-D-manno-octulosonate and CTP: step 1/1. The protein operates within bacterial outer membrane biogenesis; lipopolysaccharide biosynthesis. Its function is as follows. Activates KDO (a required 8-carbon sugar) for incorporation into bacterial lipopolysaccharide in Gram-negative bacteria. In Shigella dysenteriae serotype 1 (strain Sd197), this protein is 3-deoxy-manno-octulosonate cytidylyltransferase.